The chain runs to 82 residues: DNA-directed RNA polymerase subunit Rpo5 (82 aa).

Belongs to the archaeal Rpo5/eukaryotic RPB5 RNA polymerase subunit family. Part of the RNA polymerase complex.

It is found in the cytoplasm. It carries out the reaction RNA(n) + a ribonucleoside 5'-triphosphate = RNA(n+1) + diphosphate. Its function is as follows. DNA-dependent RNA polymerase (RNAP) catalyzes the transcription of DNA into RNA using the four ribonucleoside triphosphates as substrates. This Thermococcus kodakarensis (strain ATCC BAA-918 / JCM 12380 / KOD1) (Pyrococcus kodakaraensis (strain KOD1)) protein is DNA-directed RNA polymerase subunit Rpo5.